Here is a 432-residue protein sequence, read N- to C-terminus: MEGLAVRLLRGSRLLRRNFPTCLSSWKIPPHVSKSSQSEALLNITNNGIHFAPLQTFTDEEMMIKSSVKKFAQEQIAPLVSTMDENSKMEKSVIQGLFQQGLMGIEVDPEYGGTGASFLSTVLVIEELAKVDASVAVFCEIQNTLINTLIRKHGTEEQKGTYLPQLTTEKVGSFCLSEAGAGSDSFALKTRADKEGDYYVLNGSKMWISSAEHAGLFLVMANVDPTIGYKGITSFLVDRDTPGLHIGKPENKLGLRASSTCPLTFENVKVPETNILGQIGHGYKYAIGSLNEGRIGIAAQMLGLAQGCFDYTIPYIKERIQFGKRLFDFQGLQHQVAHVATQLEAARLLTYNAARLLEAGKPFIKEASMAKYYASEIAGQTTSKCIEWMGGVGYTKDYPVEKYFRDAKIGTIYEGASNIQLNTIAKHIDAEY.

The N-terminal 33 residues, 1 to 33 (MEGLAVRLLRGSRLLRRNFPTCLSSWKIPPHVS), are a transit peptide targeting the mitochondrion. An N6-acetyllysine; alternate modification is found at lysine 70. Position 70 is an N6-succinyllysine; alternate (lysine 70). FAD is bound by residues 174-183 (FCLSEAGAGS) and 207-209 (WIS). Serine 183 is a binding site for substrate. Serine 183 is modified (phosphoserine). Substrate is bound by residues tyrosine 229 and tyrosine 283. Residue lysine 284 is modified to N6-acetyllysine; alternate. An N6-succinyllysine; alternate modification is found at lysine 284. Residue 291-294 (NEGR) coordinates substrate. FAD contacts are provided by residues arginine 319, glutamine 330, and 387-391 (EWMGG). Glutamate 414 acts as the Proton acceptor in catalysis. 416–418 (ASN) lines the FAD pocket. Residue lysine 426 is modified to N6-acetyllysine.

It belongs to the acyl-CoA dehydrogenase family. Homotetramer. The cofactor is FAD.

The protein localises to the mitochondrion matrix. It catalyses the reaction 2-methylbutanoyl-CoA + oxidized [electron-transfer flavoprotein] + H(+) = (2E)-2-methylbut-2-enoyl-CoA + reduced [electron-transfer flavoprotein]. The catalysed reaction is (2S)-2-methylbutanoyl-CoA + oxidized [electron-transfer flavoprotein] + H(+) = (2E)-2-methylbut-2-enoyl-CoA + reduced [electron-transfer flavoprotein]. It carries out the reaction (2R)-2-methylbutanoyl-CoA + oxidized [electron-transfer flavoprotein] + H(+) = ethylacryloyl-CoA + reduced [electron-transfer flavoprotein]. The enzyme catalyses butanoyl-CoA + oxidized [electron-transfer flavoprotein] + H(+) = (2E)-butenoyl-CoA + reduced [electron-transfer flavoprotein]. It catalyses the reaction 2-methylpropanoyl-CoA + oxidized [electron-transfer flavoprotein] + H(+) = 2-methylpropenoyl-CoA + reduced [electron-transfer flavoprotein]. The catalysed reaction is hexanoyl-CoA + oxidized [electron-transfer flavoprotein] + H(+) = (2E)-hexenoyl-CoA + reduced [electron-transfer flavoprotein]. It carries out the reaction valproyl-CoA + oxidized [electron-transfer flavoprotein] + H(+) = (2E)-2-propylpent-2-enoyl-CoA + reduced [electron-transfer flavoprotein]. It functions in the pathway lipid metabolism; mitochondrial fatty acid beta-oxidation. Its pathway is amino-acid degradation; L-isoleucine degradation. In terms of biological role, short and branched chain specific acyl-CoA dehydrogenase that catalyzes the removal of one hydrogen from C-2 and C-3 of the fatty acyl-CoA thioester, resulting in the formation of trans-2-enoyl-CoA. Among the different mitochondrial acyl-CoA dehydrogenases, acts specifically on short and branched chain acyl-CoA derivatives such as (S)-2-methylbutyryl-CoA as well as short straight chain acyl-CoAs such as butyryl-CoA. Plays an important role in the metabolism of L-isoleucine by catalyzing the dehydrogenation of 2-methylbutyryl-CoA, one of the steps of the L-isoleucine catabolic pathway. Can also act on valproyl-CoA, a metabolite of the valproic acid drug. In Pongo abelii (Sumatran orangutan), this protein is Short/branched chain specific acyl-CoA dehydrogenase, mitochondrial (ACADSB).